Reading from the N-terminus, the 708-residue chain is Metabotropic glutamate receptor-like protein L (708 aa).

The signal sequence occupies residues 1-24 (MKLIIKNLILLLVSCLYFLSNVSC). N-linked (GlcNAc...) asparagine glycosylation is found at N21, N235, N310, and N366. The Extracellular portion of the chain corresponds to 25-370 (DQEVHMALLL…TTGSINKTFM (346 aa)). A helical transmembrane segment spans residues 371 to 391 (AVSILEMAICLIIGIIVIFFF). Residues 392–401 (SRNINIIYST) are Cytoplasmic-facing. A helical membrane pass occupies residues 402–422 (IPYCLTILLGASLIAVAIFLW). Residues 423–435 (NLRDLNTQICTSK) are Extracellular-facing. A helical membrane pass occupies residues 436–456 (IWMASLGYNVLIGFIIIKSSL). At 457–479 (IYFKFKEMVKSKNEKISPIPFGR) the chain is on the cytoplasmic side. A helical transmembrane segment spans residues 480-500 (IVLWFVPLLIIDCVLLIIYST). The Extracellular segment spans residues 501-531 (SGNPGKIDSLGLDGIGRYEYTQNCVNNLTGD). Residue N527 is glycosylated (N-linked (GlcNAc...) asparagine). A helical membrane pass occupies residues 532–552 (IILYIILVFHGLQLLYGCVIA). The Cytoplasmic portion of the chain corresponds to 553-568 (WKTRVIDLEEFIEAHD). The helical transmembrane segment at 569–589 (FATAIYLITFCSFIIVILMVG) threads the bilayer. Residues 590-597 (VTSTSNRN) are Extracellular-facing. The chain crosses the membrane as a helical span at residues 598-618 (TIISACAIFSSFSCVLIIFGA). The Cytoplasmic portion of the chain corresponds to 619–708 (KFWKIYKPVE…SSRAAAQNDN (90 aa)). Residues 638–681 (KPQKSYSGSGGSGNSSGSKSKKTSAHSSTSGVKSGTSAPTQTSQ) are disordered. Residues 669–681 (VKSGTSAPTQTSQ) are compositionally biased toward polar residues.

This sequence in the N-terminal section; belongs to the BMP lipoprotein family. In the C-terminal section; belongs to the G-protein coupled receptor 3 family. GABA-B receptor subfamily.

It is found in the membrane. The protein is Metabotropic glutamate receptor-like protein L (far1) of Dictyostelium discoideum (Social amoeba).